Reading from the N-terminus, the 399-residue chain is Large envelope protein (399 aa).

Position 1 is an N-acetylmethionine (methionine 1). A lipid anchor (N-myristoyl glycine; by host) is attached at glycine 2. The tract at residues 2–118 (GLSWTVPLEW…PPLRDTHPQA (117 aa)) is pre-S1. The segment at 2–173 (GLSWTVPLEW…FSRIGDPAPN (172 aa)) is pre-S. Residues 2–180 (GLSWTVPLEW…APNMEGITSG (179 aa)) are Virion surface; in external conformation-facing. The Intravirion; in internal conformation portion of the chain corresponds to 2–252 (GLSWTVPLEW…PGYRWMCLRR (251 aa)). Serine 4 is a glycosylation site (N-linked (GlcNAc...) asparagine). The segment at 85–109 (KTLPADPPPASTNRQSGRQPTPITP) is disordered. Positions 95–105 (STNRQSGRQPT) are enriched in polar residues. The pre-S2 stretch occupies residues 119–173 (MQWNSTTFHQALQDPRVRGLYFPAGGSSSGTVNPVPTTASLISSIFSRIGDPAPN). Residues 181-201 (FLGPLLVLQAGFFLLTKILTI) form a helical membrane-spanning segment. At 202 to 252 (PQSLDSWWTSLNFLGGAPVCLGQNSQSPTSNHSPTSCPPICPGYRWMCLRR) the chain is on the intravirion; in external conformation side. The helical transmembrane segment at 253-273 (FIIFLFILLLCLIFLLVLLGY) threads the bilayer. Topologically, residues 274-347 (QGMLPVCPLI…WASARFSWLS (74 aa)) are virion surface. Asparagine 319 is a glycosylation site (N-linked (GlcNAc...) asparagine; by host). The chain crosses the membrane as a helical span at residues 348–368 (LLVPFVQWFAGLSPTVWLSVI). Residues 369 to 374 (WMMWYW) are Intravirion-facing. The helical transmembrane segment at 375 to 397 (GPSLYNILSPFIPLLPIFFCLWV) threads the bilayer. The Virion surface portion of the chain corresponds to 398 to 399 (YI).

It belongs to the orthohepadnavirus major surface antigen family. In its internal form (Li-HBsAg), interacts with the capsid protein and with the isoform S. Interacts with host chaperone CANX. In terms of assembly, associates with host chaperone CANX through its pre-S2 N glycan; this association may be essential for isoform M proper secretion. As to quaternary structure, interacts with isoform L. Interacts with the antigens of satellite virus HDV (HDVAgs); this interaction is required for encapsidation of HDV genomic RNA. Isoform M is N-terminally acetylated by host at a ratio of 90%, and N-glycosylated by host at the pre-S2 region. In terms of processing, myristoylated.

It localises to the virion membrane. Its function is as follows. The large envelope protein exists in two topological conformations, one which is termed 'external' or Le-HBsAg and the other 'internal' or Li-HBsAg. In its external conformation the protein attaches the virus to cell receptors and thereby initiating infection. This interaction determines the species specificity and liver tropism. This attachment induces virion internalization predominantly through caveolin-mediated endocytosis. The large envelope protein also assures fusion between virion membrane and endosomal membrane. In its internal conformation the protein plays a role in virion morphogenesis and mediates the contact with the nucleocapsid like a matrix protein. The middle envelope protein plays an important role in the budding of the virion. It is involved in the induction of budding in a nucleocapsid independent way. In this process the majority of envelope proteins bud to form subviral lipoprotein particles of 22 nm of diameter that do not contain a nucleocapsid. The protein is Large envelope protein of Hepatitis B virus genotype E (isolate Cote d'Ivoire/ABI-129/2003) (HBV-E).